A 246-amino-acid chain; its full sequence is Aquaporin SIP1-1 (246 aa).

2 consecutive transmembrane segments (helical) span residues 13–33 and 45–65; these read AAVTFLWVLCVSTLGASTAAV and YALLVTVSLLSVLLFAFNLLC. Positions 74 to 76 match the NPA 1 motif; the sequence is NPT. 3 consecutive transmembrane segments (helical) span residues 95–115, 139–159, and 166–186; these read FPLALRFPAQAAGAVGGAMAI, GAAAELVLTFVITLAVLWIIV, and IVKTWMLSISTVCLVLTGAAY. The NPA 2 signature appears at 192-194; the sequence is NPA. Residues 214–234 traverse the membrane as a helical segment; the sequence is VYWICPFVGAVLAAWVFRAVF.

This sequence belongs to the MIP/aquaporin (TC 1.A.8) family. SIP (TC 1.A.8.10) subfamily. As to expression, expressed in roots, leaves and anthers.

The protein localises to the membrane. Its function is as follows. Aquaporins facilitate the transport of water and small neutral solutes across cell membranes. The sequence is that of Aquaporin SIP1-1 (SIP1-1) from Oryza sativa subsp. japonica (Rice).